The following is a 358-amino-acid chain: DnaJ homolog subfamily C member 18 (358 aa).

A J domain is found at 82-146 (NYYEILGVSR…DKRLRYDEYG (65 aa)). The chain crosses the membrane as a helical span at residues 228-248 (AFIQLLPVLVIVIISVITQLL).

It localises to the endoplasmic reticulum membrane. The polypeptide is DnaJ homolog subfamily C member 18 (DNAJC18) (Bos taurus (Bovine)).